A 109-amino-acid polypeptide reads, in one-letter code: Nucleoid-associated protein Spro_1136 (109 aa).

2 disordered regions span residues 1-21 (MFGK…QEKM) and 90-109 (EKMA…KMPF). A compositionally biased stretch (low complexity) spans 11 to 21 (MKQAQQMQEKM).

The protein belongs to the YbaB/EbfC family. In terms of assembly, homodimer.

It is found in the cytoplasm. It localises to the nucleoid. Its function is as follows. Binds to DNA and alters its conformation. May be involved in regulation of gene expression, nucleoid organization and DNA protection. In Serratia proteamaculans (strain 568), this protein is Nucleoid-associated protein Spro_1136.